The following is a 322-amino-acid chain: Pantothenate kinase (322 aa).

ATP is bound at residue glycine 100–serine 107.

It belongs to the prokaryotic pantothenate kinase family.

The protein resides in the cytoplasm. The enzyme catalyses (R)-pantothenate + ATP = (R)-4'-phosphopantothenate + ADP + H(+). The protein operates within cofactor biosynthesis; coenzyme A biosynthesis; CoA from (R)-pantothenate: step 1/5. The polypeptide is Pantothenate kinase (Brucella canis (strain ATCC 23365 / NCTC 10854 / RM-666)).